The sequence spans 187 residues: Phosphatidylethanolamine-binding protein 1 (187 aa).

N-acetylalanine; in peptide hippocampal cholinergic neurostimulating is present on A2. S6 carries the post-translational modification Phosphoserine. The residue at position 42 (T42) is a Phosphothreonine. A phosphoserine mark is found at S51, S52, S54, S98, and S132. The tract at residues 93–134 (KGNDISSGTVLSDYVGSGPPSGTGLHRYVWLVYEQEQPLSCD) is interaction with RAF1.

This sequence belongs to the phosphatidylethanolamine-binding protein family. As to quaternary structure, has a tendency to form dimers by disulfide cross-linking. Interacts with RAF1 and this interaction is enhanced if RAF1 is phosphorylated on residues 'Ser-338', 'Ser-339', 'Tyr-340' and 'Tyr-341'. Interacts with ALOX15; in response to IL13/interleukin-13, prevents the interaction of PEBP1 with RAF1 to activate the ERK signaling cascade. In terms of tissue distribution, HCNP is expressed in brain. Increased expression in aged senescence-accelerated mice.

Its subcellular location is the cytoplasm. Binds ATP, opioids and phosphatidylethanolamine. Has lower affinity for phosphatidylinositol and phosphatidylcholine. Serine protease inhibitor which inhibits thrombin, neuropsin and chymotrypsin but not trypsin, tissue type plasminogen activator and elastase. Inhibits the kinase activity of RAF1 by inhibiting its activation and by dissociating the RAF1/MEK complex and acting as a competitive inhibitor of MEK phosphorylation. Functionally, HCNP may be involved in the function of the presynaptic cholinergic neurons of the central nervous system. HCNP increases the production of choline acetyltransferase but not acetylcholinesterase. Seems to be mediated by a specific receptor. In Mus musculus (Mouse), this protein is Phosphatidylethanolamine-binding protein 1 (Pebp1).